A 142-amino-acid polypeptide reads, in one-letter code: MLELSLRMCIDYRALTKVTIKNKYPIPRVDDLFDRLAQATWFTKLDLRSGYWQVRIAKGDEPKTTCVTRYGSFEFRVMPFGLTNALATFCNLMNNVLYEYLDHFVVVYLDDLVVYTIYSNSLHEHIKHLRVVRESKEIFESD.

The protein localises to the mitochondrion. The enzyme catalyses RNA(n) + a ribonucleoside 5'-triphosphate = RNA(n+1) + diphosphate. This is RNA-directed DNA polymerase homolog from Oenothera berteroana (Bertero's evening primrose).